Reading from the N-terminus, the 160-residue chain is MKTKAIYPGTFDPVTYGHIDIVTRAADMFDHVLFAIANSARKNPMFTLDERITLAKEVTSHLDNVEVIGFCELMANFAKKQQANILIRGLRSVSDFEYEWQLANMNRHFMPELESVFLLPSQNLSFLSSSLIKDVALHDGDISSFLPEPIAQAMLKKLGK.

Residue Thr-10 coordinates substrate. ATP is bound by residues 10–11 (TF) and His-18. 3 residues coordinate substrate: Lys-42, Met-74, and Arg-88. Residues 89–91 (GLR), Glu-99, and 124–130 (LSFLSSS) contribute to the ATP site.

It belongs to the bacterial CoaD family. In terms of assembly, homohexamer. Mg(2+) is required as a cofactor.

The protein localises to the cytoplasm. The enzyme catalyses (R)-4'-phosphopantetheine + ATP + H(+) = 3'-dephospho-CoA + diphosphate. It functions in the pathway cofactor biosynthesis; coenzyme A biosynthesis; CoA from (R)-pantothenate: step 4/5. Functionally, reversibly transfers an adenylyl group from ATP to 4'-phosphopantetheine, yielding dephospho-CoA (dPCoA) and pyrophosphate. The protein is Phosphopantetheine adenylyltransferase of Photorhabdus laumondii subsp. laumondii (strain DSM 15139 / CIP 105565 / TT01) (Photorhabdus luminescens subsp. laumondii).